An 809-amino-acid chain; its full sequence is E3 ubiquitin-protein ligase RSP5 (809 aa).

Residues 1 to 105 (MPSSISVKLV…GHLDEDTATS (105 aa)) form the C2 domain. 3 disordered regions span residues 99–122 (DEDT…KKSN), 139–240 (PSSS…RRTD), and 257–298 (WKRP…DNSS). Positions 108–122 (RPREETITRDLKKSN) are enriched in basic and acidic residues. Residues 139–148 (PSSSPHSQAP) are compositionally biased toward polar residues. The span at 149 to 183 (SGHTASSSTNTSSTTRTNGHSTSSTRNHSTSHPSR) shows a compositional bias: low complexity. The span at 184–196 (GTAQAVESTLQSG) shows a compositional bias: polar residues. A compositionally biased stretch (low complexity) spans 197–219 (TTAATNTATTSHRSTNSTSSATR). WW domains follow at residues 229-262 (GRLP…RPTL), 331-364 (GELP…DPRR), and 387-420 (GPLP…DPRL). A Glycyl lysine isopeptide (Lys-Gly) (interchain with G-Cter in ubiquitin) cross-link involves residue Lys258. The HECT domain maps to 705–809 (YRGYQESDEV…VEETIGFGQE (105 aa)). Residue Cys777 is the Glycyl thioester intermediate of the active site.

Belongs to the RSP5/NEDD4 family. In terms of assembly, component of the RSP5-BUL1/2 ubiquitin ligase complex composed of at least RSP5 and BUL1 or BUL2. Component of the RSP5-UBA1-UBC5 ubiquitin ligase complex composed of E3 RSP5, E1 UBA1 and E2 UBC5. Also forms a ternary complex with RUP1 and UBP2. Interacts (via WW domains) with LSB1. Interacts (via WW domains) with PIN3/LSB2. Interacts (via WW domains) with RCR1 (via PY motifs). Interacts with UBP2; the interaction is direct. Interacts with HSE1. Interacts with LAS17. Interacts with ROG3. Interacts with ROD1. Interacts with RVS167. Interacts with ubiquitin. The ubiquitination appears to be the result of an intramolecular transfer of ubiquitin.

Its subcellular location is the cytoplasm. It is found in the nucleus. The protein resides in the cytoskeleton. The protein localises to the actin patch. The enzyme catalyses S-ubiquitinyl-[E2 ubiquitin-conjugating enzyme]-L-cysteine + [acceptor protein]-L-lysine = [E2 ubiquitin-conjugating enzyme]-L-cysteine + N(6)-ubiquitinyl-[acceptor protein]-L-lysine.. Its pathway is protein modification; protein ubiquitination. E3 ubiquitin-protein ligase which accepts ubiquitin from an E2 ubiquitin-conjugating enzyme in the form of a thioester and then directly transfers the ubiquitin to targeted substrates. Component of a RSP5 ubiquitin ligase complex which specifies polyubiquitination and intracellular trafficking of the general amino acid permease GAP1 as well as other cell surface proteins like GAP1, FUR4, MAL61, PMA1 and STE2. The RSP5-BUL1/2 complex is also necessary for the heat-shock element (HSE)-mediated gene expression, nitrogen starvation GLN3-dependent transcription, pressure-induced differential regulation of the two tryptophan permeases TAT1 and TAT2 and sorting efficiency into multivesicular bodies. The RSP5-UBA1-UBC5 ubiquitin ligase complex ubiquitinates RPO21 forming 'Lys-63'-linked polyubiquitin chains. Plays a role in tolerance to o-dinitrobenzene. Involved in actin cytoskeleton organization and dynamics. Ubiquitinates the LAS17-binding proteins LSB1 and PIN3/LSB2 without directing them for degradation and affects LAS17 levels in a SLA1-dependent and LSB1/2-independent manner. Also involved in the degradation of non-functional 18S rRNAs in response to stalled ribosomes by mediating polyubiquitination of monoubiquitinated RPS3/uS3: mediates formation of 'Lys-63'-linked polyubiquitin chains on monoubiquitined RPS3/uS3, promoting the degradation of non-functional 18S rRNAs. The protein is E3 ubiquitin-protein ligase RSP5 (RSP5) of Saccharomyces cerevisiae (strain ATCC 204508 / S288c) (Baker's yeast).